A 417-amino-acid chain; its full sequence is MLKREMNIADYDAELWQAMEQEKVRQEEHIELIASENYTSPRVMQAQGSQLTNKYAEGYPGKRYYGGCEYVDIVEQLAIDRAKELFGADYANVQPHSGSQANFAVYTALLQPGDTVLGMNLAQGGHLTHGSPVNFSGKLYNIIPYGIDESGKIDYEDMAKQAETHKPKMIIGGFSAYSGVVDWAKMREIADSIGAYLFVDMAHVAGLIAAGVYPNPVPHAHVVTTTTHKTLAGPRGGLILAHGGNEELYKKLNSAVFPSAQGGPLMHVIAAKAVALKEAMEPEFKVYQQQVAKNAKAMVEVFLNRGYKVVSGGTENHLFLLDLVDKNLTGKEADAALGRANITVNKNSVPNDPKSPFVTSGIRIGSPAVTRRGFKEAEVKELAGWMCDVLDNINDEAVIERIKGKVLDICARFPVYA.

(6S)-5,6,7,8-tetrahydrofolate is bound by residues Leu121 and 125–127; that span reads GHL. Lys229 is subject to N6-(pyridoxal phosphate)lysine. A (6S)-5,6,7,8-tetrahydrofolate-binding site is contributed by 355 to 357; the sequence is SPF.

It belongs to the SHMT family. As to quaternary structure, homodimer. Requires pyridoxal 5'-phosphate as cofactor.

It is found in the cytoplasm. The enzyme catalyses (6R)-5,10-methylene-5,6,7,8-tetrahydrofolate + glycine + H2O = (6S)-5,6,7,8-tetrahydrofolate + L-serine. Its pathway is one-carbon metabolism; tetrahydrofolate interconversion. The protein operates within amino-acid biosynthesis; glycine biosynthesis; glycine from L-serine: step 1/1. Catalyzes the reversible interconversion of serine and glycine with tetrahydrofolate (THF) serving as the one-carbon carrier. This reaction serves as the major source of one-carbon groups required for the biosynthesis of purines, thymidylate, methionine, and other important biomolecules. Also exhibits THF-independent aldolase activity toward beta-hydroxyamino acids, producing glycine and aldehydes, via a retro-aldol mechanism. The chain is Serine hydroxymethyltransferase from Enterobacter sp. (strain 638).